The following is a 603-amino-acid chain: Replication protein A 70 kDa DNA-binding subunit (603 aa).

The interval 131–152 (PKPAVTSNSKPIAKKEPSHNNN) is disordered. Phosphoserine is present on Ser160. The segment at residues 179–252 (WVIKARVTSK…QLKPANKQYS (74 aa)) is a DNA-binding region (OB). Ser420 bears the Phosphoserine mark. The C4-type zinc finger occupies 464 to 486 (CPQSDCNKKVVDEGNDQFRCEKC).

The protein belongs to the replication factor A protein 1 family. As to quaternary structure, component of the heterotrimeric canonical replication protein A complex (RPA).

It localises to the nucleus. As part of the heterotrimeric replication protein A complex (RPA/RP-A), binds and stabilizes single-stranded DNA intermediates, that form during DNA replication or upon DNA stress. It prevents their reannealing and in parallel, recruits and activates different proteins and complexes involved in DNA metabolism. Thereby, it plays an essential role both in DNA replication and the cellular response to DNA damage. In Drosophila melanogaster (Fruit fly), this protein is Replication protein A 70 kDa DNA-binding subunit.